Here is a 154-residue protein sequence, read N- to C-terminus: MDSLDQCIVNACKNSWDKSYLAGTPNKDNCSGFVQSVAAELGVPMPRGNANAMVDGLEQSWTKLASGAEAAQKAAQGFLVIAGLKGRTYGHVAVVISGPLYRQKYPMCWCGSIAGAVGQSQGLKSVGQVWNRTDRDRLNYYVYSLASCSLPRAS.

The cysteines at positions 7 and 148 are disulfide-linked. The active-site Nucleophile is the cysteine 30. The Proton acceptor role is filled by histidine 91.

Forms a heterotetramer with Tsi1 consisting of two Tse1 dimers and two Tsi1 dimers. Formation of the complex inactivates Tse1 enzymatic activity.

The protein resides in the host membrane. The protein localises to the secreted. It catalyses the reaction Hydrolysis of gamma-D-glutamyl bonds to the L-terminus (position 7) of meso-diaminopimelic acid (meso-A2pm) in 7-(L-Ala-gamma-D-Glu)-meso-A2pm and 7-(L-Ala-gamma-D-Glu)-7-(D-Ala)-meso-A2pm. It is required that the D-terminal amino and carboxy groups of meso-A2pm are unsubstituted.. Functionally, toxin secreted by the H1 type VI (H1-T6SS) secretion system into the periplasm of recipient cells. Degrades peptidoglycan via amidase activity thereby helping itself to compete with other bacteria. To protect itself, the bacterium synthesizes immunity protein Tsi1 that specifically interacts with and inactivates cognate toxin. The chain is Peptidoglycan amidase Tse1 from Pseudomonas aeruginosa (strain ATCC 15692 / DSM 22644 / CIP 104116 / JCM 14847 / LMG 12228 / 1C / PRS 101 / PAO1).